The primary structure comprises 200 residues: Protein GrpE (200 aa).

Positions 15–47 are disordered; it reads DLEMDLNEEELEESEVNEDKEFEELDKSEEENE. Acidic residues predominate over residues 16–47; that stretch reads LEMDLNEEELEESEVNEDKEFEELDKSEEENE.

This sequence belongs to the GrpE family. In terms of assembly, homodimer.

Its subcellular location is the cytoplasm. Its function is as follows. Participates actively in the response to hyperosmotic and heat shock by preventing the aggregation of stress-denatured proteins, in association with DnaK and GrpE. It is the nucleotide exchange factor for DnaK and may function as a thermosensor. Unfolded proteins bind initially to DnaJ; upon interaction with the DnaJ-bound protein, DnaK hydrolyzes its bound ATP, resulting in the formation of a stable complex. GrpE releases ADP from DnaK; ATP binding to DnaK triggers the release of the substrate protein, thus completing the reaction cycle. Several rounds of ATP-dependent interactions between DnaJ, DnaK and GrpE are required for fully efficient folding. This chain is Protein GrpE, found in Clostridium tetani (strain Massachusetts / E88).